A 500-amino-acid polypeptide reads, in one-letter code: Lysine--tRNA ligase (500 aa).

Mg(2+) is bound by residues glutamate 410 and glutamate 417.

The protein belongs to the class-II aminoacyl-tRNA synthetase family. Homodimer. Requires Mg(2+) as cofactor.

Its subcellular location is the cytoplasm. It catalyses the reaction tRNA(Lys) + L-lysine + ATP = L-lysyl-tRNA(Lys) + AMP + diphosphate. This Shewanella baltica (strain OS155 / ATCC BAA-1091) protein is Lysine--tRNA ligase.